A 102-amino-acid polypeptide reads, in one-letter code: Protamine-2 (102 aa).

Ser-8, Ser-10, and Ser-37 each carry phosphoserine. Disordered regions lie at residues 15-41 (EVYG…PEQV) and 66-102 (IHRQ…CRRH).

The protein belongs to the protamine P2 family. In terms of assembly, interacts with TDRP. Post-translationally, proteolytic processing into mature chains is required for histone eviction during spermatogenesis. Transition proteins (TNP1 and TNP2) are required for processing. As to expression, testis.

Its subcellular location is the nucleus. It localises to the chromosome. Protamines substitute for histones in the chromatin of sperm during the haploid phase of spermatogenesis. They compact sperm DNA into a highly condensed, stable and inactive complex. The sequence is that of Protamine-2 (PRM2) from Pongo pygmaeus (Bornean orangutan).